The sequence spans 273 residues: MQILKSVSELLEFRNNCGGSVGFVPTMGALHNGHATLIKNSVSQNDDTIVSVFVNPTQFLPGEDLEKYPRNQSGDIKICELCGASALFFPNADEIYSKDEPLIIAPKRISTILEGATRPGHFDGVCMVLNKLFNLVSPTRAYFGKKDSQQLVIVQNMVKRFFLNLEIVPCDIVRESDGLALSSRNSYLNDDELCYALKLSRSLMRASNLIKANELNSNIIKSSMSECLEPLKVDYIAVVDRNFEPIENVEIGNSIILVAAYVGKTRLIDNIWI.

27–34 lines the ATP pocket; that stretch reads MGALHNGH. The active-site Proton donor is His34. Gln58 contributes to the (R)-pantoate binding site. Gln58 serves as a coordination point for beta-alanine. 144 to 147 is a binding site for ATP; sequence GKKD. Gln150 contributes to the (R)-pantoate binding site. ATP contacts are provided by residues Val173 and 181-184; that span reads LSSR.

The protein belongs to the pantothenate synthetase family. As to quaternary structure, homodimer.

It is found in the cytoplasm. The catalysed reaction is (R)-pantoate + beta-alanine + ATP = (R)-pantothenate + AMP + diphosphate + H(+). It participates in cofactor biosynthesis; (R)-pantothenate biosynthesis; (R)-pantothenate from (R)-pantoate and beta-alanine: step 1/1. In terms of biological role, catalyzes the condensation of pantoate with beta-alanine in an ATP-dependent reaction via a pantoyl-adenylate intermediate. The chain is Pantothenate synthetase from Campylobacter fetus subsp. fetus (strain 82-40).